A 209-amino-acid chain; its full sequence is Large ribosomal subunit protein uL3 (209 aa).

N5-methylglutamine is present on glutamine 150.

Belongs to the universal ribosomal protein uL3 family. In terms of assembly, part of the 50S ribosomal subunit. Forms a cluster with proteins L14 and L19. Methylated by PrmB.

One of the primary rRNA binding proteins, it binds directly near the 3'-end of the 23S rRNA, where it nucleates assembly of the 50S subunit. In Escherichia coli O139:H28 (strain E24377A / ETEC), this protein is Large ribosomal subunit protein uL3.